Here is a 92-residue protein sequence, read N- to C-terminus: PqqA binding protein (92 aa).

It belongs to the PqqD family. Monomer. Interacts with PqqE.

It participates in cofactor biosynthesis; pyrroloquinoline quinone biosynthesis. Functions as a PqqA binding protein and presents PqqA to PqqE, in the pyrroloquinoline quinone (PQQ) biosynthetic pathway. The polypeptide is PqqA binding protein (Xanthomonas oryzae pv. oryzae (strain PXO99A)).